The primary structure comprises 428 residues: Adenylosuccinate synthetase (428 aa).

GTP contacts are provided by residues 12 to 18 (GDEGKGK) and 40 to 42 (GHT). The active-site Proton acceptor is the Asp13. 2 residues coordinate Mg(2+): Asp13 and Gly40. IMP contacts are provided by residues 13 to 16 (DEGK), 38 to 41 (NAGH), Thr129, Arg143, Gln224, Thr239, and Arg303. Residue His41 is the Proton donor of the active site. Residue 299-305 (VTTGRIR) participates in substrate binding. Residues Arg305, 331–333 (KVD), and 410–412 (AYG) contribute to the GTP site.

It belongs to the adenylosuccinate synthetase family. Homodimer. Mg(2+) serves as cofactor.

It localises to the cytoplasm. It catalyses the reaction IMP + L-aspartate + GTP = N(6)-(1,2-dicarboxyethyl)-AMP + GDP + phosphate + 2 H(+). It participates in purine metabolism; AMP biosynthesis via de novo pathway; AMP from IMP: step 1/2. In terms of biological role, plays an important role in the de novo pathway of purine nucleotide biosynthesis. Catalyzes the first committed step in the biosynthesis of AMP from IMP. This is Adenylosuccinate synthetase from Francisella tularensis subsp. novicida (strain U112).